A 38-amino-acid chain; its full sequence is Conotoxin r7a (38 aa).

The propeptide occupies 1 to 5 (APAKR). Tryptophan 6 is subject to 6'-bromotryptophan. 4-carboxyglutamate occurs at positions 10 and 11. Disulfide bonds link cysteine 12–cysteine 26, cysteine 19–cysteine 30, and cysteine 25–cysteine 35. Tryptophan 15 bears the 6'-bromotryptophan mark. Residues glutamate 20 and glutamate 31 each carry the 4-carboxyglutamate modification. The residue at position 38 (tryptophan 38) is a 6'-bromotryptophan.

It belongs to the conotoxin O2 superfamily. Expressed by the venom duct.

The protein resides in the secreted. Functionally, induces a sleep-like state in mice. The chain is Conotoxin r7a from Conus radiatus (Rayed cone).